A 102-amino-acid chain; its full sequence is Small ribosomal subunit protein uS10 (102 aa).

Belongs to the universal ribosomal protein uS10 family. As to quaternary structure, part of the 30S ribosomal subunit.

Its function is as follows. Involved in the binding of tRNA to the ribosomes. This Bifidobacterium adolescentis (strain ATCC 15703 / DSM 20083 / NCTC 11814 / E194a) protein is Small ribosomal subunit protein uS10.